A 149-amino-acid chain; its full sequence is Oocyte-expressed protein (149 aa).

The KH; atypical domain occupies 49–110 (PLVFYLEAWL…RVQNRVKSVL (62 aa)).

Belongs to the KHDC1 family. As to quaternary structure, component of the subcortical maternal complex (SCMC), at least composed of NLRP5, KHDC3, OOEP, and TLE6. Within the complex, interacts with NLRP5, KHDC3 and TLE6. As part of the SCMC interacts with the SCMC-associated protein NLRP4F. The SCMC may facilitate translocation of its components between the nuclear and cytoplasmic compartments. Forms a scaffold complex with KHDC3/FILIA, and interacts with BLM and TRIM25 at DNA replication forks.

It is found in the cytoplasm. The protein resides in the nucleus. In terms of biological role, component of the subcortical maternal complex (SCMC), a multiprotein complex that plays a key role in early embryonic development. The SCMC complex is a structural constituent of cytoplasmic lattices, which consist in fibrous structures found in the cytoplasm of oocytes and preimplantation embryos. They are required to store maternal proteins critical for embryonic development, such as proteins that control epigenetic reprogramming of the preimplantation embryo, and prevent their degradation or activation. As part of the OOEP-KHDC3 scaffold, recruits BLM and TRIM25 to DNA replication forks, thereby promoting the ubiquitination of BLM by TRIM25, enhancing BLM retainment at replication forks and therefore promoting stalled replication fork restart. Positively regulates the homologous recombination-mediated DNA double-strand break (DSB) repair pathway by regulating ATM activation and RAD51 recruitment to DSBs in oocytes. Thereby contributes to oocyte survival and the resumption and completion of meiosis. This Canis lupus familiaris (Dog) protein is Oocyte-expressed protein (OOEP).